Here is a 229-residue protein sequence, read N- to C-terminus: Large ribosomal subunit protein uL1 (229 aa).

It belongs to the universal ribosomal protein uL1 family. As to quaternary structure, part of the 50S ribosomal subunit.

Its function is as follows. Binds directly to 23S rRNA. The L1 stalk is quite mobile in the ribosome, and is involved in E site tRNA release. Protein L1 is also a translational repressor protein, it controls the translation of the L11 operon by binding to its mRNA. In Caulobacter sp. (strain K31), this protein is Large ribosomal subunit protein uL1.